Consider the following 77-residue polypeptide: uncharacterized protein (77 aa).

A run of 2 helical transmembrane segments spans residues 22–42 and 44–64; these read VFAN…LPVG and LIGL…FFLG.

It is found in the cell membrane. This is an uncharacterized protein from Methanocaldococcus jannaschii (strain ATCC 43067 / DSM 2661 / JAL-1 / JCM 10045 / NBRC 100440) (Methanococcus jannaschii).